The following is a 101-amino-acid chain: Small ribosomal subunit protein uS10 (101 aa).

This sequence belongs to the universal ribosomal protein uS10 family. In terms of assembly, part of the 30S ribosomal subunit.

Its function is as follows. Involved in the binding of tRNA to the ribosomes. The protein is Small ribosomal subunit protein uS10 of Bacteroides fragilis (strain ATCC 25285 / DSM 2151 / CCUG 4856 / JCM 11019 / LMG 10263 / NCTC 9343 / Onslow / VPI 2553 / EN-2).